Here is a 765-residue protein sequence, read N- to C-terminus: Phosphoribosylformylglycinamidine synthase subunit PurL (765 aa).

The segment covering 1–13 has biased composition (polar residues); that stretch reads MTVSPTSAPTQAI. The segment at 1–32 is disordered; it reads MTVSPTSAPTQAIDTVERAATTPDEPQPFGEL. The active site involves His65. ATP contacts are provided by Tyr68 and Lys112. Residue Glu114 coordinates Mg(2+). Substrate contacts are provided by residues 115-118 and Arg137; that span reads SHNH. The Proton acceptor role is filled by His116. Asp138 contacts Mg(2+). Residue Gln263 coordinates substrate. Position 291 (Asp291) interacts with Mg(2+). 335–337 is a substrate binding site; the sequence is ESQ. The ATP site is built by Asn523 and Gly560. Asn561 serves as a coordination point for Mg(2+). Ser563 contacts substrate.

This sequence belongs to the FGAMS family. Monomer. Part of the FGAM synthase complex composed of 1 PurL, 1 PurQ and 2 PurS subunits.

The protein localises to the cytoplasm. The enzyme catalyses N(2)-formyl-N(1)-(5-phospho-beta-D-ribosyl)glycinamide + L-glutamine + ATP + H2O = 2-formamido-N(1)-(5-O-phospho-beta-D-ribosyl)acetamidine + L-glutamate + ADP + phosphate + H(+). Its pathway is purine metabolism; IMP biosynthesis via de novo pathway; 5-amino-1-(5-phospho-D-ribosyl)imidazole from N(2)-formyl-N(1)-(5-phospho-D-ribosyl)glycinamide: step 1/2. In terms of biological role, part of the phosphoribosylformylglycinamidine synthase complex involved in the purines biosynthetic pathway. Catalyzes the ATP-dependent conversion of formylglycinamide ribonucleotide (FGAR) and glutamine to yield formylglycinamidine ribonucleotide (FGAM) and glutamate. The FGAM synthase complex is composed of three subunits. PurQ produces an ammonia molecule by converting glutamine to glutamate. PurL transfers the ammonia molecule to FGAR to form FGAM in an ATP-dependent manner. PurS interacts with PurQ and PurL and is thought to assist in the transfer of the ammonia molecule from PurQ to PurL. This Mycolicibacterium paratuberculosis (strain ATCC BAA-968 / K-10) (Mycobacterium paratuberculosis) protein is Phosphoribosylformylglycinamidine synthase subunit PurL.